The chain runs to 291 residues: Heterogeneous nuclear ribonucleoprotein D-like-B (291 aa).

2 RRM domains span residues 34–116 and 119–196; these read SKMF…QGKE and KKVF…AAQP. The interval 196–226 is disordered; sequence PKEVYRQQQQKQQKGGRGGTRGRGRGQGYSN. Residues 210-222 show a composition bias toward gly residues; sequence GGRGGTRGRGRGQ.

It localises to the nucleus. It is found in the cytoplasm. Functionally, acts as a transcriptional regulator. Binds DNA and RNA. The protein is Heterogeneous nuclear ribonucleoprotein D-like-B (hnrnpdl-b) of Xenopus laevis (African clawed frog).